The chain runs to 127 residues: Large ribosomal subunit protein bL17 (127 aa).

It belongs to the bacterial ribosomal protein bL17 family. Part of the 50S ribosomal subunit. Contacts protein L32.

In Leuconostoc citreum (strain KM20), this protein is Large ribosomal subunit protein bL17.